A 435-amino-acid polypeptide reads, in one-letter code: E3 ubiquitin-protein ligase RNFT1 (435 aa).

Residues 1–62 (MPLFLLSLPT…SSEDASTPQC (62 aa)) form a disordered region. The span at 16–34 (GHERRQRPEAKTSGSEKKY) shows a compositional bias: basic and acidic residues. Residues 40–62 (ANRSQLHSPPGTGSSEDASTPQC) are compositionally biased toward polar residues. Helical transmembrane passes span 158–178 (ILIL…LGIG), 203–223 (IQCA…YYTF), 233–253 (IFLN…IVGI), 256–276 (FILK…PSFI), 298–318 (TFVP…FGNV), and 323–343 (LGIL…FGHL). The tract at residues 368–419 (CSDVDDICSICQAEFQKPILLICQHIFCEECMTLWFNREKTCPLCRTVISDH) is required for ubiquitin ligase activity and for protection against ER stress-induced cell death. An RING-type zinc finger spans residues 375–413 (CSICQAEFQKPILLICQHIFCEECMTLWFNREKTCPLCR).

Expressed at highest levels in testis, lower levels in heart, liver, lung, and kidney. Not detected in brain, ovary, and uterus. Down-regulated in testis from patients with maturation arrest (MA) or Sertoli cell-only syndrome (SCOS). Ubiquitously expressed with high expression in testis.

Its subcellular location is the endoplasmic reticulum membrane. The catalysed reaction is S-ubiquitinyl-[E2 ubiquitin-conjugating enzyme]-L-cysteine + [acceptor protein]-L-lysine = [E2 ubiquitin-conjugating enzyme]-L-cysteine + N(6)-ubiquitinyl-[acceptor protein]-L-lysine.. It participates in protein modification; protein ubiquitination. Functionally, E3 ubiquitin-protein ligase that acts in the endoplasmic reticulum (ER)-associated degradation (ERAD) pathway, which targets misfolded proteins that accumulate in the endoplasmic reticulum (ER) for ubiquitination and subsequent proteasome-mediated degradation. Protects cells from ER stress-induced apoptosis. This Homo sapiens (Human) protein is E3 ubiquitin-protein ligase RNFT1 (RNFT1).